Reading from the N-terminus, the 135-residue chain is Ribosome-binding factor A (135 aa).

Belongs to the RbfA family. In terms of assembly, monomer. Binds 30S ribosomal subunits, but not 50S ribosomal subunits or 70S ribosomes.

The protein localises to the cytoplasm. Its function is as follows. One of several proteins that assist in the late maturation steps of the functional core of the 30S ribosomal subunit. Associates with free 30S ribosomal subunits (but not with 30S subunits that are part of 70S ribosomes or polysomes). Required for efficient processing of 16S rRNA. May interact with the 5'-terminal helix region of 16S rRNA. The protein is Ribosome-binding factor A of Sinorhizobium fredii (strain NBRC 101917 / NGR234).